A 66-amino-acid chain; its full sequence is UPF0370 protein YpfN (66 aa).

The chain crosses the membrane as a helical span at residues 4-24 (LAKYWWILVLVFLVGVLLNVI). The disordered stretch occupies residues 39 to 66 (KPELPPHRDFNDKWDDEDGWPKKDQPKK). Residues 42–66 (LPPHRDFNDKWDDEDGWPKKDQPKK) show a composition bias toward basic and acidic residues.

The protein belongs to the UPF0370 family.

The protein resides in the cell membrane. This Salmonella paratyphi B (strain ATCC BAA-1250 / SPB7) protein is UPF0370 protein YpfN.